The sequence spans 76 residues: UPF0291 protein GK1331 (76 aa).

Residues 57-76 are disordered; the sequence is PSGNDVTPKKLKESQRRRFH. Basic and acidic residues predominate over residues 63-76; sequence TPKKLKESQRRRFH.

It belongs to the UPF0291 family.

The protein localises to the cytoplasm. The protein is UPF0291 protein GK1331 of Geobacillus kaustophilus (strain HTA426).